The sequence spans 89 residues: Co-chaperonin GroES (89 aa).

It belongs to the GroES chaperonin family. Heptamer of 7 subunits arranged in a ring. Interacts with the chaperonin GroEL.

It is found in the cytoplasm. Together with the chaperonin GroEL, plays an essential role in assisting protein folding. The GroEL-GroES system forms a nano-cage that allows encapsulation of the non-native substrate proteins and provides a physical environment optimized to promote and accelerate protein folding. GroES binds to the apical surface of the GroEL ring, thereby capping the opening of the GroEL channel. This chain is Co-chaperonin GroES, found in Parabacteroides distasonis (strain ATCC 8503 / DSM 20701 / CIP 104284 / JCM 5825 / NCTC 11152).